A 327-amino-acid polypeptide reads, in one-letter code: Phenylalanine--tRNA ligase alpha subunit (327 aa).

E252 is a Mg(2+) binding site.

The protein belongs to the class-II aminoacyl-tRNA synthetase family. Phe-tRNA synthetase alpha subunit type 1 subfamily. As to quaternary structure, tetramer of two alpha and two beta subunits. Mg(2+) is required as a cofactor.

The protein localises to the cytoplasm. It catalyses the reaction tRNA(Phe) + L-phenylalanine + ATP = L-phenylalanyl-tRNA(Phe) + AMP + diphosphate + H(+). In Sodalis glossinidius (strain morsitans), this protein is Phenylalanine--tRNA ligase alpha subunit.